We begin with the raw amino-acid sequence, 472 residues long: Sulfate adenylyltransferase subunit 1 (472 aa).

A tr-type G domain is found at 22 to 239; it reads KELLRFLTCG…TVPIAGDKNY (218 aa). The segment at 31–38 is G1; the sequence is GSVDDGKS. 31–38 is a GTP binding site; it reads GSVDDGKS. The interval 89–93 is G2; sequence GITID. Residues 110 to 113 are G3; it reads DTPG. GTP is bound by residues 110-114 and 165-168; these read DTPGH and NKMD. The segment at 165–168 is G4; the sequence is NKMD. A G5 region spans residues 202 to 204; it reads SAL.

Belongs to the TRAFAC class translation factor GTPase superfamily. Classic translation factor GTPase family. CysN/NodQ subfamily. In terms of assembly, heterodimer composed of CysD, the smaller subunit, and CysN.

The catalysed reaction is sulfate + ATP + H(+) = adenosine 5'-phosphosulfate + diphosphate. It participates in sulfur metabolism; hydrogen sulfide biosynthesis; sulfite from sulfate: step 1/3. Functionally, with CysD forms the ATP sulfurylase (ATPS) that catalyzes the adenylation of sulfate producing adenosine 5'-phosphosulfate (APS) and diphosphate, the first enzymatic step in sulfur assimilation pathway. APS synthesis involves the formation of a high-energy phosphoric-sulfuric acid anhydride bond driven by GTP hydrolysis by CysN coupled to ATP hydrolysis by CysD. This Cellvibrio japonicus (strain Ueda107) (Pseudomonas fluorescens subsp. cellulosa) protein is Sulfate adenylyltransferase subunit 1.